An 89-amino-acid chain; its full sequence is Small ribosomal subunit protein uS15 (89 aa).

Belongs to the universal ribosomal protein uS15 family. In terms of assembly, part of the 30S ribosomal subunit. Forms a bridge to the 50S subunit in the 70S ribosome, contacting the 23S rRNA.

Functionally, one of the primary rRNA binding proteins, it binds directly to 16S rRNA where it helps nucleate assembly of the platform of the 30S subunit by binding and bridging several RNA helices of the 16S rRNA. Its function is as follows. Forms an intersubunit bridge (bridge B4) with the 23S rRNA of the 50S subunit in the ribosome. The chain is Small ribosomal subunit protein uS15 from Methylobacterium sp. (strain 4-46).